Reading from the N-terminus, the 137-residue chain is MGENQETQKSFLETVKFDSNGLVPAIVQDHETGKVLMMAWMNLESLKMTLEKKKACYWSRSRNKLWLKGESSGNMQEVHDILIDCDGDTLLLKVSQKGGACHVGYHSCFYRRTVDGESMEICDTLMFDPEEVYGKQS.

Mg(2+) is bound at residue D84. A Zn(2+)-binding site is contributed by C85. D86 and D88 together coordinate Mg(2+). Positions 101 and 108 each coordinate Zn(2+).

It belongs to the PRA-CH family. Homodimer. Mg(2+) serves as cofactor. Zn(2+) is required as a cofactor.

It localises to the cytoplasm. The catalysed reaction is 1-(5-phospho-beta-D-ribosyl)-5'-AMP + H2O = 1-(5-phospho-beta-D-ribosyl)-5-[(5-phospho-beta-D-ribosylamino)methylideneamino]imidazole-4-carboxamide. It participates in amino-acid biosynthesis; L-histidine biosynthesis; L-histidine from 5-phospho-alpha-D-ribose 1-diphosphate: step 3/9. Catalyzes the hydrolysis of the adenine ring of phosphoribosyl-AMP. This chain is Phosphoribosyl-AMP cyclohydrolase, found in Chlorobaculum tepidum (strain ATCC 49652 / DSM 12025 / NBRC 103806 / TLS) (Chlorobium tepidum).